The primary structure comprises 270 residues: Type III pantothenate kinase (270 aa).

Residue 11–18 participates in ATP binding; that stretch reads DAGNSRIK. Residues tyrosine 96 and 103 to 106 each bind substrate; that span reads GSDR. Aspartate 105 acts as the Proton acceptor in catalysis. Threonine 129 provides a ligand contact to ATP. Substrate is bound at residue threonine 195.

It belongs to the type III pantothenate kinase family. Homodimer. NH4(+) serves as cofactor. K(+) is required as a cofactor.

Its subcellular location is the cytoplasm. It catalyses the reaction (R)-pantothenate + ATP = (R)-4'-phosphopantothenate + ADP + H(+). It participates in cofactor biosynthesis; coenzyme A biosynthesis; CoA from (R)-pantothenate: step 1/5. Catalyzes the phosphorylation of pantothenate (Pan), the first step in CoA biosynthesis. This chain is Type III pantothenate kinase, found in Paraburkholderia xenovorans (strain LB400).